The primary structure comprises 137 residues: Putative nucleoside diphosphate kinase (137 aa).

Phenylalanine 45, arginine 73, threonine 79, arginine 90, and asparagine 100 together coordinate ATP. The Pros-phosphohistidine intermediate role is filled by histidine 103.

Belongs to the NDK family. Requires Mg(2+) as cofactor.

The catalysed reaction is a 2'-deoxyribonucleoside 5'-diphosphate + ATP = a 2'-deoxyribonucleoside 5'-triphosphate + ADP. It carries out the reaction a ribonucleoside 5'-diphosphate + ATP = a ribonucleoside 5'-triphosphate + ADP. Its function is as follows. Major role in the synthesis of nucleoside triphosphates other than ATP. The ATP gamma phosphate is transferred to the NDP beta phosphate via a ping-pong mechanism, using a phosphorylated active-site intermediate. In Homo sapiens (Human), this protein is Putative nucleoside diphosphate kinase (NME2P1).